The following is a 170-amino-acid chain: Small ribosomal subunit protein uS3mB (170 aa).

A mitochondrion-targeting transit peptide spans 1 to 30; the sequence is MAAPVMSAFGRLQGLIRTERSLLTHVQSRC.

It belongs to the universal ribosomal protein uS3 family. As to quaternary structure, component of the mitochondrial ribosome small subunit (28S) which comprises a 12S rRNA and about 30 distinct proteins.

It localises to the mitochondrion. The protein is Small ribosomal subunit protein uS3mB (mrps24-b) of Xenopus laevis (African clawed frog).